Reading from the N-terminus, the 276-residue chain is UDP-3-O-acyl-N-acetylglucosamine deacetylase (276 aa).

Zn(2+) is bound by residues H76, H234, and D238. Residue H261 is the Proton donor of the active site.

It belongs to the LpxC family. Zn(2+) is required as a cofactor.

It catalyses the reaction a UDP-3-O-[(3R)-3-hydroxyacyl]-N-acetyl-alpha-D-glucosamine + H2O = a UDP-3-O-[(3R)-3-hydroxyacyl]-alpha-D-glucosamine + acetate. It functions in the pathway glycolipid biosynthesis; lipid IV(A) biosynthesis; lipid IV(A) from (3R)-3-hydroxytetradecanoyl-[acyl-carrier-protein] and UDP-N-acetyl-alpha-D-glucosamine: step 2/6. Catalyzes the hydrolysis of UDP-3-O-myristoyl-N-acetylglucosamine to form UDP-3-O-myristoylglucosamine and acetate, the committed step in lipid A biosynthesis. The polypeptide is UDP-3-O-acyl-N-acetylglucosamine deacetylase (Synechocystis sp. (strain ATCC 27184 / PCC 6803 / Kazusa)).